The following is a 201-amino-acid chain: MARYTGPVTRKSRRLGTDLVGGDQSFEKRPYPPGQHGRARIKDSEYRQQLQEKQKARFTYGVMEKQFRRYYEEAVRHSGKTGEELLKILESRLDNVVYRAGLARTRRMARQLVSHGHFSVNGVHVNVPSYRVSQYDIIDVRDNSLNTVPFQIARETAGDRPIPSWLQVVGERQRILIHQLPERAQIEVPLTEQLIVEYYSK.

The disordered stretch occupies residues 1-42 (MARYTGPVTRKSRRLGTDLVGGDQSFEKRPYPPGQHGRARIK). One can recognise an S4 RNA-binding domain in the interval 91 to 157 (SRLDNVVYRA…VPFQIARETA (67 aa)).

Belongs to the universal ribosomal protein uS4 family. Part of the 30S ribosomal subunit. Contacts protein S5. The interaction surface between S4 and S5 is involved in control of translational fidelity.

Its function is as follows. One of the primary rRNA binding proteins, it binds directly to 16S rRNA where it nucleates assembly of the body of the 30S subunit. Functionally, with S5 and S12 plays an important role in translational accuracy. In Mycobacterium marinum (strain ATCC BAA-535 / M), this protein is Small ribosomal subunit protein uS4.